Here is a 163-residue protein sequence, read N- to C-terminus: NF-kappa-B inhibitor-interacting Ras-like protein 2 (163 aa).

Positions 1-163 (MGKSCKVVIC…SANWNLHPDH (163 aa)) are small GTPase-like. 11-18 (GQHGVGKT) lines the GTP pocket. Residues 35-43 (MIETQEDIY) carry the Effector region motif. GTP-binding positions include 61–65 (DTRGL) and 120–123 (NKSD).

It belongs to the small GTPase superfamily. Ras family. KappaB-Ras subfamily.

It is found in the cytoplasm. In terms of biological role, atypical Ras-like protein that acts as a potent regulator of NF-kappa-B activity by preventing the degradation of NF-kappa-B inhibitor beta (NFKBIB) by most signals, explaining why NFKBIB is more resistant to degradation. This is NF-kappa-B inhibitor-interacting Ras-like protein 2 (nkiras2) from Xenopus laevis (African clawed frog).